Consider the following 512-residue polypeptide: MARAVHRSGLVALGIATALMASCAFAAKNVVVAVGSNFTTLDPYDANDTLSQAVAKSFYQGLFGLDKEMKLKNVLAESYTVSDDGLTYTVKLREGIKFQDGTDFNAAAVKANLDRASDPANHLKRYNLYKNIAKTEAIDPTTVKITLKQPFSAFINILAHPATAMISPAALEKYGKEIGFHPVGTGPYELDTWNQTDFVKVKKFVGYWQPGLPKLDSITWRPVADNNTRAAMLQTGEAQFAFPIPYEQAALLEKNKNIELMASPSIMQRYISMNVTQKPFDNPKVREALNYAINRPALVKVAFAGYATPATGVVPPSIAYAQSYKPWPYDPVKARELLKKAGYPNGFSTTLWSSHNHSTAQKVLQFTQQQLAQVGIKAQVTAMDAGQRAAEVEGKGQKESGVRMFYTGWSASTGEADWALSPLFASQNWPPTLFNTAFYSNKQVDDFLAQALKTNDPAEKTRLYKAAQDIIWQESPWIPLVVEKLVSAHSKNLTGFWIMPDTGFSFEDADLQ.

The signal sequence occupies residues 1-26 (MARAVHRSGLVALGIATALMASCAFA).

It belongs to the bacterial solute-binding protein 5 family. In terms of assembly, the complex is composed of two ATP-binding proteins (GsiA), two transmembrane proteins (GsiC and GsiD) and a solute-binding protein (GsiB).

Its subcellular location is the periplasm. In terms of biological role, part of the ABC transporter complex GsiABCD involved in glutathione import. Binds glutathione. In Escherichia coli O6:K15:H31 (strain 536 / UPEC), this protein is Glutathione-binding protein GsiB.